Consider the following 157-residue polypeptide: Ribosome maturation factor RimP (157 aa).

Belongs to the RimP family.

The protein localises to the cytoplasm. Required for maturation of 30S ribosomal subunits. This chain is Ribosome maturation factor RimP, found in Geobacillus kaustophilus (strain HTA426).